The primary structure comprises 236 residues: 7-cyano-7-deazaguanine synthase (236 aa).

7–17 serves as a coordination point for ATP; it reads CSGGLDSVSLA. Residues C185, C193, C196, and C199 each coordinate Zn(2+).

It belongs to the QueC family. Zn(2+) serves as cofactor.

The enzyme catalyses 7-carboxy-7-deazaguanine + NH4(+) + ATP = 7-cyano-7-deazaguanine + ADP + phosphate + H2O + H(+). The protein operates within purine metabolism; 7-cyano-7-deazaguanine biosynthesis. Its function is as follows. Catalyzes the ATP-dependent conversion of 7-carboxy-7-deazaguanine (CDG) to 7-cyano-7-deazaguanine (preQ(0)). The protein is 7-cyano-7-deazaguanine synthase of Agrobacterium fabrum (strain C58 / ATCC 33970) (Agrobacterium tumefaciens (strain C58)).